The primary structure comprises 109 residues: Large ribosomal subunit protein bL31B (109 aa).

The tract at residues 79–109 (NVRQPAQQPQPEEDALPAAKGKKKVVTKKKK) is disordered. Over residues 98–109 (KGKKKVVTKKKK) the composition is skewed to basic residues.

It belongs to the bacterial ribosomal protein bL31 family. Type B subfamily. In terms of assembly, part of the 50S ribosomal subunit.

This is Large ribosomal subunit protein bL31B from Chlamydia pneumoniae (Chlamydophila pneumoniae).